The following is a 443-amino-acid chain: Structure-specific endonuclease subunit SLX1 (443 aa).

The GIY-YIG domain occupies 13-93 (RVYVCYCLRS…QKPHASRHLR (81 aa)). Residues 121–140 (FPATRSSAPSSAASHDSGLN) form a disordered region. An SLX1-type zinc finger spans residues 361 to 419 (CGLCGGHINRHVPLSYTHCPHACDAVFHLTCLARYSLEQETRAHARTFCLPTSAWCPMC).

The protein belongs to the SLX1 family. Forms a heterodimer with SLX4. The cofactor is a divalent metal cation.

The protein localises to the nucleus. Its function is as follows. Catalytic subunit of the SLX1-SLX4 structure-specific endonuclease that resolves DNA secondary structures generated during DNA repair and recombination. Has endonuclease activity towards branched DNA substrates, introducing single-strand cuts in duplex DNA close to junctions with ss-DNA. The polypeptide is Structure-specific endonuclease subunit SLX1 (Malassezia globosa (strain ATCC MYA-4612 / CBS 7966) (Dandruff-associated fungus)).